Consider the following 527-residue polypeptide: Peptide chain release factor 3 (527 aa).

The tr-type G domain maps to 9 to 278 (NKRRTFAIIS…GLTQWAPKPQ (270 aa)). Residues 18–25 (SHPDAGKT), 86–90 (DTPGH), and 140–143 (NKLD) contribute to the GTP site.

Belongs to the TRAFAC class translation factor GTPase superfamily. Classic translation factor GTPase family. PrfC subfamily.

It localises to the cytoplasm. Its function is as follows. Increases the formation of ribosomal termination complexes and stimulates activities of RF-1 and RF-2. It binds guanine nucleotides and has strong preference for UGA stop codons. It may interact directly with the ribosome. The stimulation of RF-1 and RF-2 is significantly reduced by GTP and GDP, but not by GMP. The protein is Peptide chain release factor 3 of Haemophilus influenzae (strain 86-028NP).